The chain runs to 208 residues: Outer-membrane lipoprotein carrier protein (208 aa).

Residues Met1–Ala24 form the signal peptide.

The protein belongs to the LolA family. As to quaternary structure, monomer.

The protein resides in the periplasm. Participates in the translocation of lipoproteins from the inner membrane to the outer membrane. Only forms a complex with a lipoprotein if the residue after the N-terminal Cys is not an aspartate (The Asp acts as a targeting signal to indicate that the lipoprotein should stay in the inner membrane). The protein is Outer-membrane lipoprotein carrier protein of Dechloromonas aromatica (strain RCB).